Consider the following 154-residue polypeptide: SsrA-binding protein (154 aa).

The protein belongs to the SmpB family.

The protein localises to the cytoplasm. Functionally, required for rescue of stalled ribosomes mediated by trans-translation. Binds to transfer-messenger RNA (tmRNA), required for stable association of tmRNA with ribosomes. tmRNA and SmpB together mimic tRNA shape, replacing the anticodon stem-loop with SmpB. tmRNA is encoded by the ssrA gene; the 2 termini fold to resemble tRNA(Ala) and it encodes a 'tag peptide', a short internal open reading frame. During trans-translation Ala-aminoacylated tmRNA acts like a tRNA, entering the A-site of stalled ribosomes, displacing the stalled mRNA. The ribosome then switches to translate the ORF on the tmRNA; the nascent peptide is terminated with the 'tag peptide' encoded by the tmRNA and targeted for degradation. The ribosome is freed to recommence translation, which seems to be the essential function of trans-translation. The polypeptide is SsrA-binding protein (Enterococcus hirae (strain ATCC 9790 / DSM 20160 / JCM 8729 / LMG 6399 / NBRC 3181 / NCIMB 6459 / NCDO 1258 / NCTC 12367 / WDCM 00089 / R)).